Consider the following 143-residue polypeptide: MEPESILDFHTEQEEILAARARSVSRENQISLAIVLVGSEDRREIKEGIEILEDVVSDTAHSEDSRVCVHYLALAHARLKNYDKSINLLNALLRTEPSNMQATELRRAVEKKMKREGLLGLGLLGGAVAVVGGLVIAGLAFRK.

Residues 121–141 traverse the membrane as a helical segment; it reads LGLLGGAVAVVGGLVIAGLAF.

Belongs to the FIS1 family.

It localises to the mitochondrion outer membrane. The protein localises to the peroxisome membrane. Functionally, involved in the fragmentation of the mitochondrial network. Involved in perinuclear clustering of the mitochondrial network. Plays a role in removal of ultraviolet C radiation-induced mitochondrial DNA damage. May act, redundantly with fis-2, downstream of mitochondrial fission, before the fission products participate in either mitochondrial homeostasis, mitophagy, or apoptosis. The sequence is that of FIS1-related protein fis-1 from Caenorhabditis elegans.